The primary structure comprises 475 residues: Aspartyl/glutamyl-tRNA(Asn/Gln) amidotransferase subunit B (475 aa).

This sequence belongs to the GatB/GatE family. GatB subfamily. In terms of assembly, heterotrimer of A, B and C subunits.

The catalysed reaction is L-glutamyl-tRNA(Gln) + L-glutamine + ATP + H2O = L-glutaminyl-tRNA(Gln) + L-glutamate + ADP + phosphate + H(+). The enzyme catalyses L-aspartyl-tRNA(Asn) + L-glutamine + ATP + H2O = L-asparaginyl-tRNA(Asn) + L-glutamate + ADP + phosphate + 2 H(+). Functionally, allows the formation of correctly charged Asn-tRNA(Asn) or Gln-tRNA(Gln) through the transamidation of misacylated Asp-tRNA(Asn) or Glu-tRNA(Gln) in organisms which lack either or both of asparaginyl-tRNA or glutaminyl-tRNA synthetases. The reaction takes place in the presence of glutamine and ATP through an activated phospho-Asp-tRNA(Asn) or phospho-Glu-tRNA(Gln). This is Aspartyl/glutamyl-tRNA(Asn/Gln) amidotransferase subunit B from Staphylococcus epidermidis (strain ATCC 12228 / FDA PCI 1200).